We begin with the raw amino-acid sequence, 177 residues long: Thymidine kinase (177 aa).

11–18 is an ATP binding site; the sequence is GPMFSGKS. Glutamate 83 serves as the catalytic Proton acceptor. Phenylalanine 113 provides a ligand contact to substrate. Residues cysteine 138 and cysteine 141 each coordinate Zn(2+). 157 to 161 is a binding site for substrate; the sequence is IEIIG. The Zn(2+) site is built by cysteine 170 and cysteine 173.

It belongs to the thymidine kinase family. In terms of assembly, homotetramer. Two molecules of substrate bind to each enzyme tetramer.

It carries out the reaction thymidine + ATP = dTMP + ADP + H(+). Its function is as follows. Phosphorylates thymidine and thymidine analogs, such as azidothymidine (AZT). Part of the salvage pathway for pyrimidine deoxyribonucleotide synthesis. The sequence is that of Thymidine kinase (OPG101) from Homo sapiens (Human).